The sequence spans 456 residues: UDP-N-acetylmuramate--L-alanine ligase (456 aa).

Glycine 114–threonine 120 is a binding site for ATP.

This sequence belongs to the MurCDEF family.

The protein resides in the cytoplasm. The enzyme catalyses UDP-N-acetyl-alpha-D-muramate + L-alanine + ATP = UDP-N-acetyl-alpha-D-muramoyl-L-alanine + ADP + phosphate + H(+). Its pathway is cell wall biogenesis; peptidoglycan biosynthesis. Functionally, cell wall formation. The sequence is that of UDP-N-acetylmuramate--L-alanine ligase from Porphyromonas gingivalis (strain ATCC 33277 / DSM 20709 / CIP 103683 / JCM 12257 / NCTC 11834 / 2561).